The primary structure comprises 278 residues: Tryptophan synthase alpha chain (278 aa).

Residues E50 and D61 each act as proton acceptor in the active site.

The protein belongs to the TrpA family. As to quaternary structure, tetramer of two alpha and two beta chains.

It catalyses the reaction (1S,2R)-1-C-(indol-3-yl)glycerol 3-phosphate + L-serine = D-glyceraldehyde 3-phosphate + L-tryptophan + H2O. It functions in the pathway amino-acid biosynthesis; L-tryptophan biosynthesis; L-tryptophan from chorismate: step 5/5. Its function is as follows. The alpha subunit is responsible for the aldol cleavage of indoleglycerol phosphate to indole and glyceraldehyde 3-phosphate. This is Tryptophan synthase alpha chain from Methylobacterium nodulans (strain LMG 21967 / CNCM I-2342 / ORS 2060).